A 445-amino-acid polypeptide reads, in one-letter code: ATP synthase subunit b-delta (445 aa).

The tract at residues 1-168 is ATP synthase subunit b; that stretch reads MSIFIGQLIG…PSSAVLEAGA (168 aa). The helical transmembrane segment at 3–23 threads the bilayer; it reads IFIGQLIGFAVIVFILVKWVV. The segment at 169–445 is ATP synthase subunit delta; it reads SLNLRAASRE…LAAARTGLPD (277 aa).

The protein in the N-terminal section; belongs to the ATPase B chain family. In the C-terminal section; belongs to the ATPase delta chain family. As to quaternary structure, F-type ATPases have 2 components, F(1) - the catalytic core - and F(0) - the membrane proton channel. F(1) has five subunits: alpha(3), beta(3), gamma(1), delta(1), epsilon(1). F(0) has three main subunits: a(1), b(2) and c(10-14). The alpha and beta chains form an alternating ring which encloses part of the gamma chain. F(1) is attached to F(0) by a central stalk formed by the gamma and epsilon chains, while a peripheral stalk is formed by the delta and b chains.

The protein localises to the cell membrane. In terms of biological role, f(1)F(0) ATP synthase produces ATP from ADP in the presence of a proton or sodium gradient. F-type ATPases consist of two structural domains, F(1) containing the extramembraneous catalytic core and F(0) containing the membrane proton channel, linked together by a central stalk and a peripheral stalk. During catalysis, ATP synthesis in the catalytic domain of F(1) is coupled via a rotary mechanism of the central stalk subunits to proton translocation. Its function is as follows. This fusion protein includes a component of the F(0) channel (subunit b) and of the F(1) subunit (subunit delta). Two copies of subunit b and one of delta together form the peripheral 'stator' stalk which links F(1) to F(0). The chain is ATP synthase subunit b-delta (atpFH) from Mycolicibacterium vanbaalenii (strain DSM 7251 / JCM 13017 / BCRC 16820 / KCTC 9966 / NRRL B-24157 / PYR-1) (Mycobacterium vanbaalenii).